A 170-amino-acid polypeptide reads, in one-letter code: Phosphopantetheine adenylyltransferase (170 aa).

T10 contributes to the substrate binding site. ATP is bound by residues 10 to 11 and H18; that span reads TF. Positions 42, 79, and 93 each coordinate substrate. Residues 94-96, E104, and 129-135 each bind ATP; these read GLR and TQFISST.

The protein belongs to the bacterial CoaD family. As to quaternary structure, homohexamer. It depends on Mg(2+) as a cofactor.

Its subcellular location is the cytoplasm. The catalysed reaction is (R)-4'-phosphopantetheine + ATP + H(+) = 3'-dephospho-CoA + diphosphate. Its pathway is cofactor biosynthesis; coenzyme A biosynthesis; CoA from (R)-pantothenate: step 4/5. Its function is as follows. Reversibly transfers an adenylyl group from ATP to 4'-phosphopantetheine, yielding dephospho-CoA (dPCoA) and pyrophosphate. This is Phosphopantetheine adenylyltransferase from Parvibaculum lavamentivorans (strain DS-1 / DSM 13023 / NCIMB 13966).